Here is a 309-residue protein sequence, read N- to C-terminus: Ribosomal RNA small subunit methyltransferase H (309 aa).

S-adenosyl-L-methionine is bound by residues 32 to 34, Asp-52, Phe-79, Asp-100, and Gln-107; that span reads AGH.

The protein belongs to the methyltransferase superfamily. RsmH family.

It is found in the cytoplasm. The catalysed reaction is cytidine(1402) in 16S rRNA + S-adenosyl-L-methionine = N(4)-methylcytidine(1402) in 16S rRNA + S-adenosyl-L-homocysteine + H(+). In terms of biological role, specifically methylates the N4 position of cytidine in position 1402 (C1402) of 16S rRNA. The polypeptide is Ribosomal RNA small subunit methyltransferase H (Mycoplasma capricolum subsp. capricolum (strain California kid / ATCC 27343 / NCTC 10154)).